The primary structure comprises 267 residues: Diphthine synthase (267 aa).

S-adenosyl-L-methionine is bound by residues Leu-9, Asp-85, Val-88, 113–114, Leu-170, Ala-211, and His-236; that span reads SI.

It belongs to the diphthine synthase family. As to quaternary structure, homodimer.

The catalysed reaction is 2-[(3S)-amino-3-carboxypropyl]-L-histidyl-[translation elongation factor 2] + 3 S-adenosyl-L-methionine = diphthine-[translation elongation factor 2] + 3 S-adenosyl-L-homocysteine + 3 H(+). Its pathway is protein modification; peptidyl-diphthamide biosynthesis. In terms of biological role, S-adenosyl-L-methionine-dependent methyltransferase that catalyzes the trimethylation of the amino group of the modified target histidine residue in translation elongation factor 2 (EF-2), to form an intermediate called diphthine. The three successive methylation reactions represent the second step of diphthamide biosynthesis. The sequence is that of Diphthine synthase from Methanococcoides burtonii (strain DSM 6242 / NBRC 107633 / OCM 468 / ACE-M).